The primary structure comprises 112 residues: Protein FAM32A (112 aa).

Residues 15-35 (KGCGDMSLGKKKKKKNKANDQ) form a disordered region.

It belongs to the FAM32 family.

The protein localises to the nucleus. May induce G2 arrest and apoptosis. May also increase cell sensitivity to apoptotic stimuli. The polypeptide is Protein FAM32A (fam32a) (Xenopus tropicalis (Western clawed frog)).